A 233-amino-acid polypeptide reads, in one-letter code: Histone H1-I (233 aa).

Disordered stretches follow at residues 1 to 55 (MSDS…HPPV) and 115 to 233 (TGAS…KKSK). Positions 17-29 (KAASPAKSPAKSP) are enriched in low complexity. Residues 51–125 (THPPVSEMVV…GASGSFKMPP (75 aa)) form the H15 domain. Basic and acidic residues-rich tracts occupy residues 128–137 (KKVDRPESAP) and 146–155 (TRVERKEKKV). Basic residues-rich tracts occupy residues 172 to 213 (AAKK…KPTP) and 223 to 233 (AAARKPAKKSK).

The protein belongs to the histone H1/H5 family.

The protein localises to the nucleus. The protein resides in the chromosome. In terms of biological role, histones H1 are necessary for the condensation of nucleosome chains into higher-order structures. The sequence is that of Histone H1-I from Glyptotendipes barbipes (Midge).